Consider the following 273-residue polypeptide: Large ribosomal subunit protein uL2cz/uL2cy (273 aa).

2 disordered regions span residues 1 to 22 (MAKH…DRQV) and 225 to 273 (PVDH…RRRK).

It belongs to the universal ribosomal protein uL2 family. As to quaternary structure, part of the 50S ribosomal subunit.

It localises to the plastid. Its subcellular location is the chloroplast. This Saccharum hybrid (Sugarcane) protein is Large ribosomal subunit protein uL2cz/uL2cy (rpl2-A).